A 382-amino-acid polypeptide reads, in one-letter code: uncharacterized protein (382 aa).

The Cytoplasmic segment spans residues 1-7 (MSIYTRP). Residues 8–28 (VMLLLCGLLLLTLAIAVLNTL) traverse the membrane as a helical segment. Residues 29-44 (VPLWLAQANLPTWQVG) are Periplasmic-facing. The helical transmembrane segment at 45–65 (MVSSSYFTGNLVGTLFTGYLI) threads the bilayer. Topologically, residues 66–74 (KRIGFNRSY) are cytoplasmic. Residues 75–95 (YLASLIFAAGCVGLGVMVGFW) traverse the membrane as a helical segment. Topologically, residues 96-101 (SWMSWR) are periplasmic. The helical transmembrane segment at 102–122 (FIAGIGCAMIWVVVESALMCS) threads the bilayer. Topologically, residues 123 to 130 (GTSHNRGR) are cytoplasmic. The chain crosses the membrane as a helical span at residues 131 to 151 (LLAAYMMVYYMGTFLGQLLVS). Over 152–156 (KVSGE) the chain is Periplasmic. Residues 157–177 (LLHVLPWVTGMILAGILPLLF) traverse the membrane as a helical segment. The Cytoplasmic portion of the chain corresponds to 178-203 (TRIVNQQTQARHSSSISAMLKLRQAR). A helical transmembrane segment spans residues 204-224 (LGVNGCIISGIVLGSLYGLMP). Residues 225-230 (LYLKHQ) lie on the Periplasmic side of the membrane. The chain crosses the membrane as a helical span at residues 231-251 (GMANASIGFWMAVLVSAGILG). The Cytoplasmic segment spans residues 252 to 269 (QWPMGRLADKFGRLLVLR). 2 consecutive transmembrane segments (helical) span residues 270–290 (VQVF…AMAP) and 291–311 (ALFI…AWAC). At 312-324 (EKVEHHQLVAMNQ) the chain is on the cytoplasmic side. A helical transmembrane segment spans residues 325-345 (ALLLSYTVGSLLGPSFAAMLM). The Periplasmic portion of the chain corresponds to 346–348 (QNY). Residues 349-369 (SDNLLFIMIASVSFIYLLMLL) traverse the membrane as a helical segment. Residues 370–382 (RNVGQTPNPVAHI) are Cytoplasmic-facing.

The protein belongs to the major facilitator superfamily. YcaD (TC 2.A.1.26) family.

The protein localises to the cell inner membrane. This is an uncharacterized protein from Salmonella typhi.